Reading from the N-terminus, the 78-residue chain is UPF0270 protein ECA4061 (78 aa).

Belongs to the UPF0270 family.

The sequence is that of UPF0270 protein ECA4061 from Pectobacterium atrosepticum (strain SCRI 1043 / ATCC BAA-672) (Erwinia carotovora subsp. atroseptica).